The sequence spans 190 residues: Hypoxanthine/guanine phosphoribosyltransferase (190 aa).

This sequence belongs to the purine/pyrimidine phosphoribosyltransferase family. Archaeal HPRT subfamily. As to quaternary structure, homodimer.

The protein resides in the cytoplasm. The enzyme catalyses IMP + diphosphate = hypoxanthine + 5-phospho-alpha-D-ribose 1-diphosphate. It carries out the reaction GMP + diphosphate = guanine + 5-phospho-alpha-D-ribose 1-diphosphate. It participates in purine metabolism; IMP biosynthesis via salvage pathway; IMP from hypoxanthine: step 1/1. In terms of biological role, catalyzes a salvage reaction resulting in the formation of IMP that is energically less costly than de novo synthesis. The polypeptide is Hypoxanthine/guanine phosphoribosyltransferase (Methanosarcina barkeri (strain Fusaro / DSM 804)).